The primary structure comprises 365 residues: tRNA/tmRNA (uracil-C(5))-methyltransferase (365 aa).

S-adenosyl-L-methionine-binding residues include Gln-189, Tyr-217, Asn-222, Glu-238, and Asp-298. The active-site Nucleophile is Cys-323. Glu-357 acts as the Proton acceptor in catalysis.

This sequence belongs to the class I-like SAM-binding methyltransferase superfamily. RNA M5U methyltransferase family. TrmA subfamily.

The catalysed reaction is uridine(54) in tRNA + S-adenosyl-L-methionine = 5-methyluridine(54) in tRNA + S-adenosyl-L-homocysteine + H(+). It catalyses the reaction uridine(341) in tmRNA + S-adenosyl-L-methionine = 5-methyluridine(341) in tmRNA + S-adenosyl-L-homocysteine + H(+). Functionally, dual-specificity methyltransferase that catalyzes the formation of 5-methyluridine at position 54 (m5U54) in all tRNAs, and that of position 341 (m5U341) in tmRNA (transfer-mRNA). The chain is tRNA/tmRNA (uracil-C(5))-methyltransferase from Shewanella baltica (strain OS155 / ATCC BAA-1091).